The chain runs to 65 residues: Dybowskin-2CDYa (65 aa).

A signal peptide spans 1–22 (MFTLKKSLLLLFFIGVIKLSLC). The propeptide occupies 23-47 (EEERNADDDERRDDPDEMDVEVENR). Residues 26-43 (RNADDDERRDDPDEMDVE) show a composition bias toward acidic residues. The disordered stretch occupies residues 26 to 65 (RNADDDERRDDPDEMDVEVENRSAVGRHGRRFGLRKHRKH). A compositionally biased stretch (basic residues) spans 50–65 (VGRHGRRFGLRKHRKH).

This sequence belongs to the frog skin active peptide (FSAP) family. Brevinin subfamily. As to expression, expressed by the skin glands.

It localises to the secreted. Antimicrobial peptide. Has activity against the Gram-positive bacterium S.aureus (MIC=6 uM) and the Gram-negative bacterium E.coli (MIC=3 uM). Lacks hemolytic activity against human erythrocytes. The protein is Dybowskin-2CDYa of Rana dybowskii (Dybovsky's frog).